A 191-amino-acid chain; its full sequence is Signal peptidase IB (191 aa).

At Met-1 to Glu-7 the chain is on the cytoplasmic side. A helical membrane pass occupies residues Trp-8–Thr-28. Residues Pro-29–Asn-191 lie on the Extracellular side of the membrane. Active-site residues include Ser-36 and Lys-77.

This sequence belongs to the peptidase S26 family.

The protein localises to the cell membrane. It carries out the reaction Cleavage of hydrophobic, N-terminal signal or leader sequences from secreted and periplasmic proteins.. Functionally, essential for cell viability. This chain is Signal peptidase IB (spsB), found in Staphylococcus aureus (strain Mu50 / ATCC 700699).